We begin with the raw amino-acid sequence, 244 residues long: MAIKGPRKHLKRLAAPANWQLPRKVKAFTVRPSPGPHSMDKSLPLLLVVRDVLKYADNAREAKKIIQTGKILIDGLKRKEYKHPAGLMDVLSIPEMDENYLVLFDESGRISLKKTDKADAKLCKIVNKTVIKGGHIQLNLHDGRNQIVKVSDATKAEEDVYKTGDSVLVSIPEQSIVGHVAFGEGKLAYVTGGKHVGEFAKIVEVENRALYSDIVTLENKDGEKFKTVKPYVFIVGQDEPVISM.

Residues 43–106 (LPLLLVVRDV…DENYLVLFDE (64 aa)) form the S4 RNA-binding domain.

Belongs to the eukaryotic ribosomal protein eS4 family.

In Methanococcus maripaludis (strain C5 / ATCC BAA-1333), this protein is Small ribosomal subunit protein eS4.